We begin with the raw amino-acid sequence, 297 residues long: NAD kinase (297 aa).

Asp74 functions as the Proton acceptor in the catalytic mechanism. NAD(+)-binding positions include 74–75 (DG), Arg79, 148–149 (NE), Arg176, Asp178, 189–194 (TAYALS), and Gln248.

Belongs to the NAD kinase family. Requires a divalent metal cation as cofactor.

The protein localises to the cytoplasm. The enzyme catalyses NAD(+) + ATP = ADP + NADP(+) + H(+). Functionally, involved in the regulation of the intracellular balance of NAD and NADP, and is a key enzyme in the biosynthesis of NADP. Catalyzes specifically the phosphorylation on 2'-hydroxyl of the adenosine moiety of NAD to yield NADP. The sequence is that of NAD kinase from Blochmanniella pennsylvanica (strain BPEN).